Here is a 236-residue protein sequence, read N- to C-terminus: Peptidase E (236 aa).

Residues Ser-122, Asp-137, and His-159 each act as charge relay system in the active site.

This sequence belongs to the peptidase S51 family.

The protein localises to the cytoplasm. It catalyses the reaction Dipeptidase E catalyzes the hydrolysis of dipeptides Asp-|-Xaa. It does not act on peptides with N-terminal Glu, Asn or Gln, nor does it cleave isoaspartyl peptides.. Hydrolyzes dipeptides containing N-terminal aspartate residues. May play a role in allowing the cell to use peptide aspartate to spare carbon otherwise required for the synthesis of the aspartate family of amino acids. This is Peptidase E from Shewanella putrefaciens (strain CN-32 / ATCC BAA-453).